Here is a 296-residue protein sequence, read N- to C-terminus: Tyrosine recombinase XerC (296 aa).

The Core-binding (CB) domain occupies Met-1–Met-84. In terms of domain architecture, Tyr recombinase spans Tyr-105–Leu-286. Residues Arg-145, Lys-169, His-238, Arg-241, and His-264 contribute to the active site. Tyr-273 (O-(3'-phospho-DNA)-tyrosine intermediate) is an active-site residue.

It belongs to the 'phage' integrase family. XerC subfamily. As to quaternary structure, forms a cyclic heterotetrameric complex composed of two molecules of XerC and two molecules of XerD.

It is found in the cytoplasm. Functionally, site-specific tyrosine recombinase, which acts by catalyzing the cutting and rejoining of the recombining DNA molecules. The XerC-XerD complex is essential to convert dimers of the bacterial chromosome into monomers to permit their segregation at cell division. It also contributes to the segregational stability of plasmids. The chain is Tyrosine recombinase XerC from Staphylococcus epidermidis (strain ATCC 35984 / DSM 28319 / BCRC 17069 / CCUG 31568 / BM 3577 / RP62A).